Reading from the N-terminus, the 310-residue chain is p-hydroxybenzoic acid efflux pump subunit AaeA (310 aa).

The chain crosses the membrane as a helical span at residues A12–Y32.

It belongs to the membrane fusion protein (MFP) (TC 8.A.1) family.

It is found in the cell inner membrane. Forms an efflux pump with AaeB. This is p-hydroxybenzoic acid efflux pump subunit AaeA from Cronobacter sakazakii (strain ATCC BAA-894) (Enterobacter sakazakii).